The chain runs to 822 residues: Lysine-specific histone demethylase 2 (822 aa).

Residues 1 to 11 (MATPRGRTKKK) are compositionally biased toward basic residues. The disordered stretch occupies residues 1-47 (MATPRGRTKKKASFDHSPDSLPLRSSGRQAKKKATETTDEDEDGGSE). Ser-13, Ser-17, and Ser-26 each carry phosphoserine. 12 residues coordinate Zn(2+): Cys-53, Cys-58, Cys-65, Cys-73, His-84, His-90, Cys-92, Cys-95, Cys-142, Cys-147, Cys-169, and Cys-185. The segment at 133–193 (DQQLPYWVQC…HCSLPEDLRV (61 aa)) adopts a CW-type zinc-finger fold. Ser-247 carries the post-translational modification Phosphoserine. The interval 273-292 (YQPNECGKALCVRPDVMELD) is GLYR1-binding. Residues 275–373 (PNECGKALCV…TGVLSVGADQ (99 aa)) form the SWIRM domain. 383-439 (KSVIIIGAGPAGLAAARQLHNFGIKVTVLEAKDRIGGRVWDDKSFKGVTVGRGAQIV) lines the FAD pocket. Histone H3-binding regions lie at residues 438–467 (IVNG…RCDL), 487–498 (FNALLDVVSEWR), and 538–572 (FHLS…AGDH). The tract at residues 564-566 (FFA) is GLYR1-binding. FAD is bound by residues Val-598, Glu-795, and 803–805 (QTV). The segment at 798-814 (NRHFPQTVTGAYLSGVR) is GLYR1-binding.

This sequence belongs to the flavin monoamine oxidase family. As to quaternary structure, interacts with its cofactor GLYR1 at nucleosomes; this interaction stimulates H3K4me1 and H3K4me2 demethylation. In contrast to KDM1A, does not form a complex with RCOR1/CoREST. Possible accessory component of the polycomb repressive deubiquitinase (PR-DUB) complex, at least composed of BAP1, one of ASXL1, ASXL2 or (probably) ASXL3 and one of MBD5 or MBD6. The PR-DUB core associates with a number of accessory proteins, including FOXK1, FOXK2, KDM1B, HCFC1 and OGT; KDM1B specifically associates with ASXL2 PR-DUB complexes. Requires FAD as cofactor. The cofactor is Zn(2+).

The protein localises to the nucleus. The protein resides in the chromosome. It catalyses the reaction N(6),N(6)-dimethyl-L-lysyl(4)-[histone H3] + 2 A + 2 H2O = L-lysyl(4)-[histone H3] + 2 formaldehyde + 2 AH2. The enzyme catalyses N(6)-methyl-L-lysyl(4)-[histone H3] + A + H2O = L-lysyl(4)-[histone H3] + formaldehyde + AH2. With respect to regulation, histone H3K4me1 and H3K4me2 demethylase activity is inhibited by DNA, this inhibition is released in complex with GLYR1. In terms of biological role, histone demethylase that demethylates 'Lys-4' of histone H3, a specific tag for epigenetic transcriptional activation, thereby acting as a corepressor. Required for de novo DNA methylation of a subset of imprinted genes during oogenesis. Acts by oxidizing the substrate by FAD to generate the corresponding imine that is subsequently hydrolyzed. Demethylates both mono- and di-methylated 'Lys-4' of histone H3. Has no effect on tri-methylated 'Lys-4', mono-, di- or tri-methylated 'Lys-9', mono-, di- or tri-methylated 'Lys-27', mono-, di- or tri-methylated 'Lys-36' of histone H3, or on mono-, di- or tri-methylated 'Lys-20' of histone H4. Alone, it is unable to demethylate H3K4me on nucleosomes and requires the presence of GLYR1 to achieve such activity, they form a multifunctional enzyme complex that modifies transcribed chromatin and facilitates Pol II transcription through nucleosomes. The sequence is that of Lysine-specific histone demethylase 2 from Homo sapiens (Human).